The sequence spans 311 residues: Putative S-adenosyl-L-methionine-dependent methyltransferase MSMEG_0095/MSMEI_0092 (311 aa).

S-adenosyl-L-methionine-binding positions include Asp-134 and 163–164; that span reads DL.

The protein belongs to the UPF0677 family.

In terms of biological role, exhibits S-adenosyl-L-methionine-dependent methyltransferase activity. The chain is Putative S-adenosyl-L-methionine-dependent methyltransferase MSMEG_0095/MSMEI_0092 from Mycolicibacterium smegmatis (strain ATCC 700084 / mc(2)155) (Mycobacterium smegmatis).